A 209-amino-acid chain; its full sequence is Protein ASG7 (209 aa).

At 1 to 49 (MTTLASSIEHKTKHLAAPFENDENTWMKKYCCQCKSCKMSVPVQPWLPR) the chain is on the lumenal side. Residues 50–70 (FFVFGILCPVFWLVNLLAWWF) form a helical membrane-spanning segment. Over 71–184 (LQYWQPHELE…LLRKTFRNWN (114 aa)) the chain is Cytoplasmic. S121, S123, and S125 each carry phosphoserine. Residue T153 is modified to Phosphothreonine. Residues 185–205 (LRSLLGLLIDSILIIFVVLLC) form a helical membrane-spanning segment. The Lumenal segment spans residues 206 to 209 (KKSR).

It is found in the endomembrane system. Required for receptor inhibition of inappropriately expressed a-factor receptor (STE3) in MAT a cells. Inhibits signaling by relocalizing the G protein beta-gamma (STE4-STE18) subunit to intracellular membranes. May also be a mechanism for the down-regulation of the mating pheromone response after the zygotic fusion event, promoting the transition of the new diploid cell to vegetative growth. This is Protein ASG7 (ASG7) from Saccharomyces cerevisiae (strain YJM789) (Baker's yeast).